The chain runs to 183 residues: Apo-citrate lyase phosphoribosyl-dephospho-CoA transferase (183 aa).

It belongs to the CitX family.

It carries out the reaction apo-[citrate lyase ACP] + 2'-(5''-triphospho-alpha-D-ribosyl)-3'-dephospho-CoA = holo-[citrate lyase ACP] + diphosphate. Its function is as follows. Transfers 2-(5''-triphosphoribosyl)-3'-dephosphocoenzyme-A on a serine residue to the apo-acyl carrier protein (gamma chain) of the citrate lyase to yield holo-acyl carrier protein. This Citrobacter koseri (strain ATCC BAA-895 / CDC 4225-83 / SGSC4696) protein is Apo-citrate lyase phosphoribosyl-dephospho-CoA transferase.